Consider the following 95-residue polypeptide: Co-chaperonin GroES (95 aa).

The disordered stretch occupies residues 20-45; that stretch reads KTKGGLIIPDSAKEKPAEGEITSVGE.

The protein belongs to the GroES chaperonin family. Heptamer of 7 subunits arranged in a ring. Interacts with the chaperonin GroEL.

Its subcellular location is the cytoplasm. Together with the chaperonin GroEL, plays an essential role in assisting protein folding. The GroEL-GroES system forms a nano-cage that allows encapsulation of the non-native substrate proteins and provides a physical environment optimized to promote and accelerate protein folding. GroES binds to the apical surface of the GroEL ring, thereby capping the opening of the GroEL channel. The protein is Co-chaperonin GroES of Paracoccus denitrificans.